The primary structure comprises 149 residues: Putative prefoldin subunit alpha (149 aa).

This sequence belongs to the prefoldin subunit alpha family.

Its subcellular location is the cytoplasm. Functionally, molecular chaperone capable of stabilizing a range of proteins. The protein is Putative prefoldin subunit alpha of Aquifex aeolicus (strain VF5).